The chain runs to 209 residues: Large ribosomal subunit protein bL25 (209 aa).

A disordered region spans residues 190–209; it reads PDASAAPVAAPAAPAKKGKK.

This sequence belongs to the bacterial ribosomal protein bL25 family. CTC subfamily. As to quaternary structure, part of the 50S ribosomal subunit; part of the 5S rRNA/L5/L18/L25 subcomplex. Contacts the 5S rRNA. Binds to the 5S rRNA independently of L5 and L18.

Functionally, this is one of the proteins that binds to the 5S RNA in the ribosome where it forms part of the central protuberance. This Delftia acidovorans (strain DSM 14801 / SPH-1) protein is Large ribosomal subunit protein bL25.